Reading from the N-terminus, the 472-residue chain is FAD-dependent monooxygenase dpmaE (472 aa).

The signal sequence occupies residues 1 to 24; the sequence is MSQRQFKVIIIGGSVTGLTLAHSL. Glutamate 35, glycine 49, and arginine 108 together coordinate FAD. 2 N-linked (GlcNAc...) asparagine glycosylation sites follow: asparagine 128 and asparagine 179. FAD is bound by residues aspartate 305 and alanine 318. Asparagine 369 carries an N-linked (GlcNAc...) asparagine glycan. Residues 440–460 traverse the membrane as a helical segment; the sequence is LLPLMFTLPLLYFGLSWIVGI.

The protein belongs to the paxM FAD-dependent monooxygenase family. It depends on FAD as a cofactor.

The protein resides in the membrane. Its pathway is secondary metabolite biosynthesis; terpenoid biosynthesis. In terms of biological role, FAD-dependent monooxygenase; part of the gene cluster that mediates the biosynthesis of the diterpenoid pyrones subglutinols A and B. The first step of the pathway is the synthesis of the alpha-pyrone moiety by the polyketide synthase dpmaA via condensation of one acetyl-CoA starter unit with 3 malonyl-CoA units and 2 methylations. The alpha-pyrone is then combined with geranylgeranyl pyrophosphate (GGPP) formed by the GGPP synthase dpmaD through the action of the prenyltransferase dpmaC to yield a linear alpha-pyrone diterpenoid. Subsequent steps in the diterpenoid pyrone biosynthetic pathway involve the decalin core formation, which is initiated by the epoxidation of the C10-C11 olefin by the FAD-dependent oxidoreductase dpmaE, and is followed by a cyclization cascade catalyzed by the terpene cyclase dpmaB. The dehydrogenase dpmaF is then involved in tetrahydrofuran (THF) ring formation at the C5 unit to complete the formation of subglutinols A and B. The chain is FAD-dependent monooxygenase dpmaE from Metarhizium anisopliae (Entomophthora anisopliae).